The following is a 358-amino-acid chain: MLGKCIKKASSTVGQSIRYSSGDVRRVTLIPGDGIGPEISASVQKIFEAADAPIAWDPVDVTPVKGRDGVFRIPSRCIELMHANKVGLKGPLETPIGKGHRSLNLAVRKEFSLYANVRPCRSLEGHKTLYDNVDVVTIRENTEGEYSGIEHEIVPGVVQSIKLITETASRNVASFAFEYARQNGRKVVTAVHKANIMRQSDGLFLSICREQAALYPDIKFKEAYLDTVCLNMVQDPSQYDVLVMPNLYGDILSDLCAGLVGGLGVTPSGNIGKGAAVFESVHGTAPDIAGQDKANPTALLLSAVMMLRYMNLPQHAARIEKAVFDAIADGRAKTGDLGGTGTCSSFTADVCARVKDLE.

Substrate-binding residues include Arg108, Arg118, Arg139, and Asp226. Mg(2+) is bound by residues Asp226, Asp250, and Asp254.

The protein belongs to the isocitrate and isopropylmalate dehydrogenases family. In terms of assembly, heterooligomer of subunits alpha, beta, and gamma in the apparent ratio of 2:1:1. Mg(2+) is required as a cofactor. Mn(2+) serves as cofactor.

It is found in the mitochondrion. The enzyme catalyses D-threo-isocitrate + NAD(+) = 2-oxoglutarate + CO2 + NADH. The sequence is that of Probable isocitrate dehydrogenase [NAD] subunit alpha, mitochondrial (idha-1) from Caenorhabditis elegans.